The chain runs to 570 residues: Ferroportin (570 aa).

Residues 1–23 (MTKARDQTHQEGCCGSLANYLTS) are Cytoplasmic-facing. The chain crosses the membrane as a helical span at residues 24 to 53 (AKFLLYLGHSLSTWGDRMWHFAVSVFLVEL). Residues D39 and H43 each contribute to the Fe cation site. The Extracellular segment spans residues 54 to 57 (YGNS). A helical membrane pass occupies residues 58 to 84 (LLLTAVYGLVVAGSVLVLGAIIGDWVD). Topologically, residues 85 to 87 (KNA) are cytoplasmic. Residues 88–118 (RLKVAQTSLVVQNVSVILCGIILMMVFLHKN) traverse the membrane as a helical segment. Topologically, residues 119–126 (ELLTMYHG) are extracellular. The chain crosses the membrane as a helical span at residues 127-162 (WVLTVCYILIITIANIANLASTATAITIQRDWIVVV). Topologically, residues 163-164 (AG) are cytoplasmic. The helical transmembrane segment at 165-195 (ENRSRLADMNATIRRIDQLTNILAPMAVGQI) threads the bilayer. Over 196–202 (MTFGSPV) the chain is Extracellular. A helical membrane pass occupies residues 203 to 229 (IGCGFISGWNLVSMCVEYFLLWKVYQK). Over 230-306 (TPALAVKAAL…DGWVSYYNQP (77 aa)) the chain is Cytoplasmic. The helical transmembrane segment at 307 to 333 (VFLAGMGLAFLYMTVLGFDCITTGYAY) threads the bilayer. C326 is a binding site for Fe cation. Residues 334 to 338 (TQGLS) are Extracellular-facing. Residues 339-366 (GSILSILMGASAITGIMGTVAFTWLRRK) form a helical membrane-spanning segment. The Cytoplasmic portion of the chain corresponds to 367 to 368 (CG). A helical membrane pass occupies residues 369–391 (LVRTGLFSGLAQLSCLILCVISV). Topologically, residues 392 to 452 (FMPGSPLDLS…EMSTKPIPIV (61 aa)) are extracellular. A glycan (N-linked (GlcNAc...) asparagine) is linked at N437. A helical membrane pass occupies residues 453-482 (SVSLLFAGVIAARIGLWSFDLTVTQLLQEN). Topologically, residues 483-487 (VIESE) are cytoplasmic. A helical transmembrane segment spans residues 488–512 (RGIINGVQNSMNYLLDLLHFIMVIL). H506 provides a ligand contact to Fe cation. Topologically, residues 513 to 515 (APN) are extracellular. Residues 516–541 (PEAFGLLVLISVSFVAMGHLMYFRFA) traverse the membrane as a helical segment. The Cytoplasmic portion of the chain corresponds to 542–570 (QKTLGNQIFVCGPDEKEVTDENQPNTSVV).

This sequence belongs to the ferroportin (FP) (TC 2.A.100) family. SLC40A subfamily. Identified in a complex with STOM. Interacts with HAMP; affinity of the peptide hormone HAMP for SLC40A1 increases by 80-fold in the presence of iron and the interaction promotes SLC40A1 ubiquitination and degradation. Part of a complex composed of SLC40A1/ferroportin, TF/transferrin and HEPH/hephaestin that transfers iron from cells to transferrin. Polyubiquitinated by RNF217; leading to proteasomal degradation. Under conditions of high systemic iron levels, both the hormone peptide hepcidin/HAMP and holo(iron bound)-transferrin/TF induce the ubiquitination, internalization and proteasomal degradation of SLC40A1 to control iron release from cells. In terms of tissue distribution, high expression in spleen, liver, kidney, heart and duodenum.

The protein localises to the cell membrane. It is found in the basolateral cell membrane. The enzyme catalyses Fe(2+)(in) = Fe(2+)(out). Functionally, transports Fe(2+) from the inside of a cell to the outside of the cell, playing a key role for maintaining systemic iron homeostasis. Transports iron from intestinal, splenic, hepatic cells, macrophages and erythrocytes into the blood to provide iron to other tissues. Controls therefore dietary iron uptake, iron recycling by macrophages and erythrocytes, and release of iron stores in hepatocytes. When iron is in excess in serum, circulating HAMP/hepcidin levels increase resulting in a degradation of SLC40A1, thus limiting the iron efflux to plasma. In Mus musculus (Mouse), this protein is Ferroportin.